A 391-amino-acid polypeptide reads, in one-letter code: Elongation factor Tu 1 (391 aa).

One can recognise a tr-type G domain in the interval 10-201 (KLHVNIGTIG…EVDRYIPTPE (192 aa)). Residues 19-26 (GHVDHGKT) form a G1 region. 19 to 26 (GHVDHGKT) is a binding site for GTP. Thr-26 contacts Mg(2+). The interval 55 to 59 (GITIS) is G2. The segment at 76 to 79 (DCPG) is G3. GTP-binding positions include 76–80 (DCPGH) and 131–134 (NKVD). A G4 region spans residues 131–134 (NKVD). The G5 stretch occupies residues 169-171 (SAL).

Belongs to the TRAFAC class translation factor GTPase superfamily. Classic translation factor GTPase family. EF-Tu/EF-1A subfamily. Monomer.

The protein resides in the cytoplasm. The enzyme catalyses GTP + H2O = GDP + phosphate + H(+). Functionally, GTP hydrolase that promotes the GTP-dependent binding of aminoacyl-tRNA to the A-site of ribosomes during protein biosynthesis. The polypeptide is Elongation factor Tu 1 (Bartonella bacilliformis (strain ATCC 35685 / KC583 / Herrer 020/F12,63)).